We begin with the raw amino-acid sequence, 698 residues long: Methionine synthase reductase (698 aa).

Positions 5 to 147 constitute a Flavodoxin-like domain; it reads LLLYATQQGQ…VVEPWIAGLW (143 aa). Position 93–124 (93–124) interacts with FMN; the sequence is LLGLGDSEYTYFCNGGKIIDKRLQELGARHFY. The hinge stretch occupies residues 166 to 247; that stretch reads ALPVASPASS…ASLNIPGLPP (82 aa). A phosphoserine mark is found at S171 and S189. Residues 271–533 enclose the FAD-binding FR-type domain; that stretch reads DPVFQVPISK…PRTTNSFHLP (263 aa). Residue K291 coordinates NADP(+). FAD-binding positions include 451 to 454 and 487 to 490; these read RPYS and GVCT. NADP(+) contacts are provided by residues 610–611, 624–626, and D659; these read SR and YVQ. W697 lines the FAD pocket.

In terms of assembly, forms a multiprotein complex with MMACHC, MMADHC and MTR. Requires FAD as cofactor. The cofactor is FMN. As to expression, found in all tissues tested, particularly abundant in skeletal muscle.

It localises to the cytoplasm. The catalysed reaction is 2 methylcob(III)alamin-[methionine synthase] + 2 S-adenosyl-L-homocysteine + NADP(+) + H(+) = 2 cob(II)alamin-[methionine synthase] + 2 S-adenosyl-L-methionine + NADPH. The enzyme catalyses 2 cob(II)alamin + A + 2 H2O + 2 H(+) = 2 aquacob(III)alamin + AH2. Its function is as follows. Key enzyme in methionine and folate homeostasis responsible for the reactivation of methionine synthase (MTR/MS) activity by catalyzing the reductive methylation of MTR-bound cob(II)alamin. Cobalamin (vitamin B12) forms a complex with MTR to serve as an intermediary in methyl transfer reactions that cycles between MTR-bound methylcob(III)alamin and MTR bound-cob(I)alamin forms, and occasional oxidative escape of the cob(I)alamin intermediate during the catalytic cycle leads to the inactive cob(II)alamin species. The processing of cobalamin in the cytosol occurs in a multiprotein complex composed of at least MMACHC, MMADHC, MTRR and MTR which may contribute to shuttle safely and efficiently cobalamin towards MTR in order to produce methionine. Also necessary for the utilization of methyl groups from the folate cycle, thereby affecting transgenerational epigenetic inheritance. Also acts as a molecular chaperone for methionine synthase by stabilizing apoMTR and incorporating methylcob(III)alamin into apoMTR to form the holoenzyme. Also serves as an aquacob(III)alamin reductase by reducing aquacob(III)alamin to cob(II)alamin; this reduction leads to stimulation of the conversion of apoMTR and aquacob(III)alamin to MTR holoenzyme. This chain is Methionine synthase reductase, found in Homo sapiens (Human).